The sequence spans 244 residues: Ribonuclease 3 (244 aa).

Residues 21 to 148 form the RNase III domain; it reads DHAPLLEAWG…MLGAIYLHHG (128 aa). Residue E61 participates in Mg(2+) binding. D65 is a catalytic residue. Mg(2+) contacts are provided by D134 and E137. Residue E137 is part of the active site. In terms of domain architecture, DRBM spans 175–242; it reads DWKTVLLEKL…AKQAVQKLNE (68 aa).

It belongs to the ribonuclease III family. As to quaternary structure, homodimer. Mg(2+) serves as cofactor.

The protein localises to the cytoplasm. The enzyme catalyses Endonucleolytic cleavage to 5'-phosphomonoester.. Digests double-stranded RNA. Involved in the processing of primary rRNA transcript to yield the immediate precursors to the large and small rRNAs (23S and 16S). Processes some mRNAs, and tRNAs when they are encoded in the rRNA operon. Processes pre-crRNA and tracrRNA of type II CRISPR loci if present in the organism. The protein is Ribonuclease 3 of Corynebacterium jeikeium (strain K411).